Reading from the N-terminus, the 483-residue chain is Isocitrate dehydrogenase [NADP] (483 aa).

Position 74 (threonine 74) interacts with NADP(+). The D-threo-isocitrate site is built by serine 83, asparagine 85, arginine 89, arginine 99, and arginine 121. Aspartate 232 contacts Mg(2+). NADP(+)-binding positions include histidine 264–isoleucine 270 and asparagine 277.

Belongs to the isocitrate and isopropylmalate dehydrogenases family. As to quaternary structure, homodimer. Mg(2+) serves as cofactor. It depends on Mn(2+) as a cofactor.

The enzyme catalyses D-threo-isocitrate + NADP(+) = 2-oxoglutarate + CO2 + NADPH. Catalyzes the oxidative decarboxylation of isocitrate to 2-oxoglutarate and carbon dioxide with the concomitant reduction of NADP(+). This chain is Isocitrate dehydrogenase [NADP] (icd), found in Rickettsia felis (strain ATCC VR-1525 / URRWXCal2) (Rickettsia azadi).